The primary structure comprises 361 residues: Tetraacyldisaccharide 4'-kinase (361 aa).

Position 49–56 (49–56 (TTGGTGKT)) interacts with ATP.

This sequence belongs to the LpxK family.

It carries out the reaction a lipid A disaccharide + ATP = a lipid IVA + ADP + H(+). The protein operates within glycolipid biosynthesis; lipid IV(A) biosynthesis; lipid IV(A) from (3R)-3-hydroxytetradecanoyl-[acyl-carrier-protein] and UDP-N-acetyl-alpha-D-glucosamine: step 6/6. In terms of biological role, transfers the gamma-phosphate of ATP to the 4'-position of a tetraacyldisaccharide 1-phosphate intermediate (termed DS-1-P) to form tetraacyldisaccharide 1,4'-bis-phosphate (lipid IVA). This is Tetraacyldisaccharide 4'-kinase from Chlorobaculum parvum (strain DSM 263 / NCIMB 8327) (Chlorobium vibrioforme subsp. thiosulfatophilum).